An 834-amino-acid chain; its full sequence is Phenylalanine--tRNA ligase beta subunit (834 aa).

One can recognise a tRNA-binding domain in the interval 48 to 159 (GDIERPLVVG…GTAEPGTDAN (112 aa)). The 82-residue stretch at 411–492 (PAPEPIRMDI…RLEGLEQIPS (82 aa)) folds into the B5 domain. Mg(2+) contacts are provided by D470, D476, E479, and E480. In terms of domain architecture, FDX-ACB spans 740–833 (SPFPAVLQDV…AADAVGAVLR (94 aa)).

It belongs to the phenylalanyl-tRNA synthetase beta subunit family. Type 1 subfamily. As to quaternary structure, tetramer of two alpha and two beta subunits. Mg(2+) serves as cofactor.

The protein localises to the cytoplasm. It catalyses the reaction tRNA(Phe) + L-phenylalanine + ATP = L-phenylalanyl-tRNA(Phe) + AMP + diphosphate + H(+). This is Phenylalanine--tRNA ligase beta subunit from Nocardia farcinica (strain IFM 10152).